The chain runs to 872 residues: Alanine--tRNA ligase (872 aa).

Zn(2+) contacts are provided by H567, H571, C669, and H673.

Belongs to the class-II aminoacyl-tRNA synthetase family. Requires Zn(2+) as cofactor.

Its subcellular location is the cytoplasm. It catalyses the reaction tRNA(Ala) + L-alanine + ATP = L-alanyl-tRNA(Ala) + AMP + diphosphate. Catalyzes the attachment of alanine to tRNA(Ala) in a two-step reaction: alanine is first activated by ATP to form Ala-AMP and then transferred to the acceptor end of tRNA(Ala). Also edits incorrectly charged Ser-tRNA(Ala) and Gly-tRNA(Ala) via its editing domain. The protein is Alanine--tRNA ligase of Streptococcus pyogenes serotype M12 (strain MGAS2096).